Consider the following 82-residue polypeptide: Pigment-dispersing hormone peptides (82 aa).

The N-terminal stretch at Met-1–Ser-26 is a signal peptide. At Ala-80 the chain carries Alanine amide.

The protein belongs to the arthropod PDH family. As to expression, expressed strongly in the head and weakly in the ventral nerve cord. Not detected in the midgut cecum or hindgut. In the cephalic neural complex, specifically localized to cells within the optic lobe, anteromedian protocerebrum, accessory lobe, tritocerebrum, and subesophageal ganglion.

It localises to the secreted. The pigment-dispersing hormone causes the migration of the distal retinal pigment into the proximal end of the pigment chromatophore cells and thus decreases the amount of light entering the retinulas. May also function as a neurotransmitter and/or neuromodulator. This is Pigment-dispersing hormone peptides from Armadillidium vulgare (Pillbug).